We begin with the raw amino-acid sequence, 147 residues long: Small ribosomal subunit protein uS12 (147 aa).

This sequence belongs to the universal ribosomal protein uS12 family. In terms of assembly, part of the 30S ribosomal subunit.

With S4 and S5 plays an important role in translational accuracy. Located at the interface of the 30S and 50S subunits. This chain is Small ribosomal subunit protein uS12, found in Methanococcus aeolicus (strain ATCC BAA-1280 / DSM 17508 / OCM 812 / Nankai-3).